Consider the following 43-residue polypeptide: Protein PsbN (43 aa).

A helical transmembrane segment spans residues 5–27 (TFLSIFISAALLGITGYSIYTAF).

The protein belongs to the PsbN family.

The protein localises to the plastid. It localises to the cyanelle thylakoid membrane. Its function is as follows. May play a role in photosystem I and II biogenesis. The chain is Protein PsbN from Cyanophora paradoxa.